A 262-amino-acid chain; its full sequence is MTEELRLIQPNSREDANLSPVSKIEIYSFFDPFSKECFKLSAILSKLRIEYKQYISIRHILNPSLRVLTKCQAQSTSDLDNIALAYKAAELQGRIRAERFIHLVQNEIIPKRDIITESMVNSCISNAGLDYEVFKEDLNSSCLKESLQVDLHIAREMEIEEAPSLVFFNEDVHEEGLKVEGLYPYHIYTYIINELIGSTIEKELPPSLEDYIQQQQLVTKEELLTIYEWPEKLMNKELKKLALQQKIEKLKSPDGKFWKAKN.

This sequence belongs to the SpxH family. As to quaternary structure, interacts with Spx.

It is found in the cytoplasm. Adapter protein required for efficient degradation of Spx by ClpXP under non-stress conditions. Interaction with Spx stabilizes Spx and exposes the C-terminus of Spx for recognition and proteolysis by ClpXP. The polypeptide is ClpXP adapter protein SpxH (Staphylococcus saprophyticus subsp. saprophyticus (strain ATCC 15305 / DSM 20229 / NCIMB 8711 / NCTC 7292 / S-41)).